The sequence spans 338 residues: Fructose-1,6-bisphosphatase 1 (338 aa).

A2 carries the post-translational modification N-acetylalanine. AMP contacts are provided by residues 18-22 and 28-32; these read VMEEG and TGELT. The Mg(2+) site is built by D69 and E98. 113-114 serves as a coordination point for AMP; it reads KY. Mg(2+) is bound by residues D119, L121, and D122. 122-125 serves as a coordination point for substrate; the sequence is DGSS. R141 is a binding site for AMP. K151 is modified (N6-succinyllysine). Substrate-binding positions include 213–216, 244–249, Y265, and 275–277; these read NEGY, RYVGSM, and KLR. Y216, Y245, and Y265 each carry phosphotyrosine. E281 provides a ligand contact to Mg(2+).

The protein belongs to the FBPase class 1 family. In terms of assembly, homotetramer. The cofactor is Mg(2+). As to expression, expressed in pancreatic islets.

It catalyses the reaction beta-D-fructose 1,6-bisphosphate + H2O = beta-D-fructose 6-phosphate + phosphate. Its pathway is carbohydrate biosynthesis; gluconeogenesis. With respect to regulation, subject to complex allosteric regulation. The enzyme can assume an active R-state, or an inactive T-state. Intermediate conformations may exist. AMP acts as an allosteric inhibitor. AMP binding affects the turnover of bound substrate and not the affinity for substrate. Fructose 2,6-bisphosphate acts as a competitive inhibitor. Fructose 2,6-bisphosphate and AMP have synergistic effects. Catalyzes the hydrolysis of fructose 1,6-bisphosphate to fructose 6-phosphate in the presence of divalent cations, acting as a rate-limiting enzyme in gluconeogenesis. Plays a role in regulating glucose sensing and insulin secretion of pancreatic beta-cells. Appears to modulate glycerol gluconeogenesis in liver. Important regulator of appetite and adiposity; increased expression of the protein in liver after nutrient excess increases circulating satiety hormones and reduces appetite-stimulating neuropeptides and thus seems to provide a feedback mechanism to limit weight gain. This Homo sapiens (Human) protein is Fructose-1,6-bisphosphatase 1 (FBP1).